Reading from the N-terminus, the 116-residue chain is Protein Rev (116 aa).

Residues Ser-5 and Ser-8 each carry the phosphoserine; by host CK2 modification. The tract at residues 18 to 26 (LIKVLYQSN) is homomultimerization. The segment at 23–48 (YQSNPPPSSEGTRQARRNRRRRWRER) is disordered. The Nuclear localization signal and RNA-binding (RRE) motif lies at 34 to 50 (TRQARRNRRRRWRERQR). Residues 36 to 47 (QARRNRRRRWRE) show a composition bias toward basic residues. The Nuclear export signal and binding to XPO1 signature appears at 73-84 (FQLPPLERLTLD). The segment at 90-116 (GTSGTQGVGSPQILVESPPVLDSGTKE) is disordered. Phosphoserine; by host occurs at positions 92 and 99.

Belongs to the HIV-1 REV protein family. Homomultimer; when bound to the RRE. Multimeric assembly is essential for activity and may involve XPO1. Binds to human KPNB1, XPO1, TNPO1, RANBP5 and IPO7. Interacts with the viral Integrase. Interacts with human KHDRBS1. Interacts with human NAP1; this interaction decreases Rev multimerization and stimulates its activity. Interacts with human DEAD-box helicases DDX3 and DDX24; these interactions may serve for viral RNA export to the cytoplasm and packaging, respectively. Interacts with human PSIP1; this interaction may inhibit HIV-1 DNA integration by promoting dissociation of the Integrase-LEDGF/p75 complex. Post-translationally, asymmetrically arginine dimethylated at one site by host PRMT6. Methylation impairs the RNA-binding activity and export of viral RNA from the nucleus to the cytoplasm. In terms of processing, phosphorylated by protein kinase CK2. Presence of, and maybe binding to the N-terminus of the regulatory beta subunit of CK2 is necessary for CK2-mediated Rev's phosphorylation.

It is found in the host nucleus. Its subcellular location is the host nucleolus. The protein localises to the host cytoplasm. Escorts unspliced or incompletely spliced viral pre-mRNAs (late transcripts) out of the nucleus of infected cells. These pre-mRNAs carry a recognition sequence called Rev responsive element (RRE) located in the env gene, that is not present in fully spliced viral mRNAs (early transcripts). This function is essential since most viral proteins are translated from unspliced or partially spliced pre-mRNAs which cannot exit the nucleus by the pathway used by fully processed cellular mRNAs. Rev itself is translated from a fully spliced mRNA that readily exits the nucleus. Rev's nuclear localization signal (NLS) binds directly to KPNB1/Importin beta-1 without previous binding to KPNA1/Importin alpha-1. KPNB1 binds to the GDP bound form of RAN (Ran-GDP) and targets Rev to the nucleus. In the nucleus, the conversion from Ran-GDP to Ran-GTP dissociates Rev from KPNB1 and allows Rev's binding to the RRE in viral pre-mRNAs. Rev multimerization on the RRE via cooperative assembly exposes its nuclear export signal (NES) to the surface. Rev can then form a complex with XPO1/CRM1 and Ran-GTP, leading to nuclear export of the complex. Conversion from Ran-GTP to Ran-GDP mediates dissociation of the Rev/RRE/XPO1/RAN complex, so that Rev can return to the nucleus for a subsequent round of export. Beside KPNB1, also seems to interact with TNPO1/Transportin-1, RANBP5/IPO5 and IPO7/RANBP7 for nuclear import. The nucleoporin-like HRB/RIP is an essential cofactor that probably indirectly interacts with Rev to release HIV RNAs from the perinuclear region to the cytoplasm. In Human immunodeficiency virus type 1 group M subtype B (isolate YU-2) (HIV-1), this protein is Protein Rev.